A 155-amino-acid polypeptide reads, in one-letter code: Low molecular weight phosphotyrosine protein phosphatase 1 (155 aa).

C9 acts as the Nucleophile in catalysis. R15 is a catalytic residue. Residue D124 is the Proton donor of the active site.

This sequence belongs to the low molecular weight phosphotyrosine protein phosphatase family. Cone cells and primary pigment cells in developing pupal retina.

It localises to the cytoplasm. It catalyses the reaction O-phospho-L-tyrosyl-[protein] + H2O = L-tyrosyl-[protein] + phosphate. The catalysed reaction is a phosphate monoester + H2O = an alcohol + phosphate. In terms of biological role, acts on tyrosine phosphorylated proteins, low-MW aryl phosphates and natural and synthetic acyl phosphates. The protein is Low molecular weight phosphotyrosine protein phosphatase 1 (primo-1) of Drosophila melanogaster (Fruit fly).